Here is a 254-residue protein sequence, read N- to C-terminus: Nickel import ATP-binding protein NikD (254 aa).

An ABC transporter domain is found at 2 to 241 (PQQIELRNIA…PKHTVTRSLV (240 aa)). Residue 36–43 (GGSGSGKS) coordinates ATP.

It belongs to the ABC transporter superfamily. Nickel importer (TC 3.A.1.5.3) family. In terms of assembly, the complex is composed of two ATP-binding proteins (NikD and NikE), two transmembrane proteins (NikB and NikC) and a solute-binding protein (NikA).

The protein localises to the cell inner membrane. The enzyme catalyses Ni(2+)(out) + ATP + H2O = Ni(2+)(in) + ADP + phosphate + H(+). Functionally, part of the ABC transporter complex NikABCDE involved in nickel import. Responsible for energy coupling to the transport system. This is Nickel import ATP-binding protein NikD from Shigella flexneri serotype 5b (strain 8401).